Consider the following 120-residue polypeptide: NAD(P)H-quinone oxidoreductase subunit 3, chloroplastic (120 aa).

The next 3 helical transmembrane spans lie at 9–29 (IFWAFLIISSVIPILAFLISG), 64–84 (MFALVFVVFDVETVFLYPWAM), and 88–108 (VLGVSVFIEALIFVLIPIVGS).

This sequence belongs to the complex I subunit 3 family. In terms of assembly, NDH is composed of at least 16 different subunits, 5 of which are encoded in the nucleus.

Its subcellular location is the plastid. The protein resides in the chloroplast thylakoid membrane. The catalysed reaction is a plastoquinone + NADH + (n+1) H(+)(in) = a plastoquinol + NAD(+) + n H(+)(out). It carries out the reaction a plastoquinone + NADPH + (n+1) H(+)(in) = a plastoquinol + NADP(+) + n H(+)(out). NDH shuttles electrons from NAD(P)H:plastoquinone, via FMN and iron-sulfur (Fe-S) centers, to quinones in the photosynthetic chain and possibly in a chloroplast respiratory chain. The immediate electron acceptor for the enzyme in this species is believed to be plastoquinone. Couples the redox reaction to proton translocation, and thus conserves the redox energy in a proton gradient. The protein is NAD(P)H-quinone oxidoreductase subunit 3, chloroplastic of Calycanthus floridus var. glaucus (Eastern sweetshrub).